Here is a 311-residue protein sequence, read N- to C-terminus: Olfactory receptor 6B1 (311 aa).

Residues 1–25 are Extracellular-facing; that stretch reads MELENQTRVTKFILVGFPGSLSMRA. N-linked (GlcNAc...) asparagine glycosylation is present at asparagine 5. Residues 26 to 46 traverse the membrane as a helical segment; that stretch reads AMFLIFLVAYILTVAENVIII. Residues 47–54 are Cytoplasmic-facing; it reads LLVLQNRP. A helical membrane pass occupies residues 55–75; the sequence is LHKPMYFFLANLSFLETWYIS. Residues 76 to 99 are Extracellular-facing; sequence VTVPKLLFSFWSVNNSISFTLCMI. Cysteines 97 and 189 form a disulfide. Residues 100-120 traverse the membrane as a helical segment; that stretch reads QLYFFIALMCTECVLLAAMAY. Over 121 to 139 the chain is Cytoplasmic; sequence DRYVAICRPLHYPTIMSHG. Residues 140 to 160 traverse the membrane as a helical segment; the sequence is LCFRLALGSWAIGFGISLAKI. The Extracellular segment spans residues 161 to 196; the sequence is YFISCLSFCGPNVINHFFCDISPVLNLSCTDMSITE. Residues 197–217 traverse the membrane as a helical segment; it reads LVDFILALVIFLFPLFITVLS. Residues 218–235 lie on the Cytoplasmic side of the membrane; sequence YGCILATILCMPTGKQKA. Residues 236–256 form a helical membrane-spanning segment; it reads FSTCASHLVVVTIFYSAIIFM. Over 257-269 the chain is Extracellular; it reads YARPRVIHAFNMN. A helical membrane pass occupies residues 270–290; it reads KIISIFYAIVTPSLNPFIYCL. The Cytoplasmic portion of the chain corresponds to 291–311; that stretch reads RNREVKEALKKLAYCQASRSD.

It belongs to the G-protein coupled receptor 1 family.

The protein localises to the cell membrane. Its function is as follows. Odorant receptor. This chain is Olfactory receptor 6B1 (OR6B1), found in Homo sapiens (Human).